Reading from the N-terminus, the 275-residue chain is MFSRRIQVLSPFLKHFVNRNARMMATEANISATSANPQSQGENLKTFEIYRWNPEKPEVKPKLQKYTVDLTKCGPMVLDALIKIKNEQDPTLTFRRSCREGICGSCAMNINGSNTLACICNIKKDNKPTKIYPLPHCFIVKDLVPDLTYFYKQYKSIEPWLQNDNIPKDKEFYQSRADRAKLDGLYECILCACCSTSCPSYWWNSEEYLGPAVLMQAYRWIIDSRDQATAKRLDVMQNSMSVYRCHTIMNCARTCPKGLNPGLAIAKVKALMATA.

A mitochondrion-targeting transit peptide spans methionine 1–methionine 24. Positions proline 57–cysteine 137 constitute a 2Fe-2S ferredoxin-type domain. Positions 98, 103, 106, and 118 each coordinate [2Fe-2S] cluster. A 4Fe-4S ferredoxin-type domain is found at aspartate 178 to tyrosine 208. Positions 188, 191, and 194 each coordinate [4Fe-4S] cluster. Cysteine 198 contacts [3Fe-4S] cluster. Tryptophan 203 contacts a ubiquinone. Residues cysteine 245 and cysteine 251 each coordinate [3Fe-4S] cluster. Cysteine 255 is a [4Fe-4S] cluster binding site.

This sequence belongs to the succinate dehydrogenase/fumarate reductase iron-sulfur protein family. As to quaternary structure, component of complex II composed of four subunits: a flavoprotein (FP), an iron-sulfur protein (IP), and a cytochrome b composed of a large and a small subunit. Requires [2Fe-2S] cluster as cofactor. The cofactor is [3Fe-4S] cluster. [4Fe-4S] cluster serves as cofactor.

Its subcellular location is the mitochondrion inner membrane. It carries out the reaction a quinone + succinate = fumarate + a quinol. The protein operates within carbohydrate metabolism; tricarboxylic acid cycle; fumarate from succinate (eukaryal route): step 1/1. Its function is as follows. Iron-sulfur protein (IP) subunit of succinate dehydrogenase (SDH) that is involved in complex II of the mitochondrial electron transport chain and is responsible for transferring electrons from succinate to ubiquinone (coenzyme Q). This is Succinate dehydrogenase [ubiquinone] iron-sulfur subunit, mitochondrial (sdh2) from Schizosaccharomyces pombe (strain 972 / ATCC 24843) (Fission yeast).